The chain runs to 90 residues: Small ribosomal subunit protein bS16 (90 aa).

It belongs to the bacterial ribosomal protein bS16 family.

This chain is Small ribosomal subunit protein bS16, found in Lactiplantibacillus plantarum (strain ATCC BAA-793 / NCIMB 8826 / WCFS1) (Lactobacillus plantarum).